A 115-amino-acid polypeptide reads, in one-letter code: Large ribosomal subunit protein bL20c (115 aa).

The protein belongs to the bacterial ribosomal protein bL20 family.

It localises to the plastid. Its subcellular location is the chloroplast. Its function is as follows. Binds directly to 23S ribosomal RNA and is necessary for the in vitro assembly process of the 50S ribosomal subunit. It is not involved in the protein synthesizing functions of that subunit. In Cycas taitungensis (Prince sago), this protein is Large ribosomal subunit protein bL20c.